The chain runs to 317 residues: Taste receptor type 2 member 14 (317 aa).

The Extracellular segment spans residues 1–7 (MGDVIKS). Residues 8-28 (IFTFVLIVEFIIGNLGNSFIA) traverse the membrane as a helical segment. Over 29–55 (LVNCIDWVKGRKISSVDQILTALAISR) the chain is Cytoplasmic. Residues 56 to 76 (ISLVWLIFGSWCVSVFLPALF) traverse the membrane as a helical segment. Over 77–87 (ATEKMFRMLTN) the chain is Extracellular. Thr86 and Trp89 together coordinate cholesterol. A helical transmembrane segment spans residues 88-108 (IWTVINHFSVWLATGLGTFYF). Topologically, residues 109-129 (LKIANFSNSIFLYLKWRVKKV) are cytoplasmic. Residues 130-150 (VLVLLLVTSVFLFLNIALINI) form a helical membrane-spanning segment. Residues 151–184 (HINASINGYRRNKTCSSDSSNFTRFSSLIVLTST) lie on the Extracellular side of the membrane. Residues Asn153, Asn162, and Asn171 are each glycosylated (N-linked (GlcNAc...) asparagine). Val180 is a binding site for cholesterol. The chain crosses the membrane as a helical span at residues 185–205 (VFIFIPFTLSLAMFLLLIFSL). The Cytoplasmic portion of the chain corresponds to 206–232 (WKHRKKMQHXVKRSGDASTKAHRGVKS). Residues 233 to 253 (VITFFLLYAIFCLSFFISVWT) traverse the membrane as a helical segment. At 254 to 261 (SERLEENL) the chain is on the extracellular side. A helical transmembrane segment spans residues 262 to 282 (IILSQVMGMAYPSCHSCVLIL). Residues Ser265 and Met268 each contribute to the cholesterol site. The Cytoplasmic portion of the chain corresponds to 283–317 (GNKKLRQASLSVLLWLRYMFKDGEPSGHKEFRESS).

This sequence belongs to the G-protein coupled receptor T2R family. As to quaternary structure, core component of the TAS2R14-GNAI1 complex, consisting of TAS2R14, GNAI1, GNB1 and GNG2; within the complex interacts with GNAI1. Core component of the TAS2R14-GNAT3 complex, consisting of TAS2R14, GNAT3, GNB1 and GNG2; within the complex interacts with GNAT3. Core component of the TAS2R14-GNAS2 complex, consisting of TAS2R14, GNAS2, GNB1 and GNG2; within the complex interacts with GNAS2.

The protein resides in the membrane. The catalysed reaction is Ca(2+)(in) = Ca(2+)(out). It carries out the reaction 3',5'-cyclic AMP(in) = 3',5'-cyclic AMP(out). Its activity is regulated as follows. Basal activity is enhanced by binding to bitter tastants, such as flufenamic acid and aristolochic acid. Regulated by cholesterol in a concentration-dependent manner. Functionally, gustducin-linked G-protein coupled receptor that plays a role in the perception of bitterness. The activity of this receptor stimulates GNAT3, activating the gustducin G-protein pathway. Likely plays a role in sensing the chemical composition of the gastrointestinal content and other extra-oral tissues via the inhibitory G-protein pathways. This Gorilla gorilla gorilla (Western lowland gorilla) protein is Taste receptor type 2 member 14 (TAS2R14).